The primary structure comprises 307 residues: Elongation factor Ts (307 aa).

The tract at residues 79 to 82 is involved in Mg(2+) ion dislocation from EF-Tu; that stretch reads TDFV.

The protein belongs to the EF-Ts family.

Its subcellular location is the cytoplasm. Its function is as follows. Associates with the EF-Tu.GDP complex and induces the exchange of GDP to GTP. It remains bound to the aminoacyl-tRNA.EF-Tu.GTP complex up to the GTP hydrolysis stage on the ribosome. This chain is Elongation factor Ts, found in Sinorhizobium medicae (strain WSM419) (Ensifer medicae).